The following is a 423-amino-acid chain: Protein CLP1 homolog (423 aa).

ATP-binding positions include Glu-16, Lys-57, and 119-124; that span reads DVGKST.

The protein belongs to the Clp1 family. Clp1 subfamily.

It is found in the nucleus. In terms of biological role, required for endonucleolytic cleavage during polyadenylation-dependent pre-mRNA 3'-end formation. The sequence is that of Protein CLP1 homolog (cbc) from Drosophila sechellia (Fruit fly).